Reading from the N-terminus, the 234-residue chain is uncharacterized protein (234 aa).

An HTH tetR-type domain is found at 24–83 (VERRNELVDGTIEAIRRHGRFLSMDEIAAEIGVSKTVLYRYFVDKNDLTTAVMMRFTQTT). Residues 46–65 (SMDEIAAEIGVSKTVLYRYF) constitute a DNA-binding region (H-T-H motif).

This is an uncharacterized protein from Mycobacterium tuberculosis (strain CDC 1551 / Oshkosh).